A 249-amino-acid polypeptide reads, in one-letter code: 1-(5-phosphoribosyl)-5-[(5-phosphoribosylamino)methylideneamino] imidazole-4-carboxamide isomerase (249 aa).

The active-site Proton acceptor is Asp-11. Residue Asp-133 is the Proton donor of the active site.

The protein belongs to the HisA/HisF family.

The protein resides in the cytoplasm. The catalysed reaction is 1-(5-phospho-beta-D-ribosyl)-5-[(5-phospho-beta-D-ribosylamino)methylideneamino]imidazole-4-carboxamide = 5-[(5-phospho-1-deoxy-D-ribulos-1-ylimino)methylamino]-1-(5-phospho-beta-D-ribosyl)imidazole-4-carboxamide. It functions in the pathway amino-acid biosynthesis; L-histidine biosynthesis; L-histidine from 5-phospho-alpha-D-ribose 1-diphosphate: step 4/9. The protein is 1-(5-phosphoribosyl)-5-[(5-phosphoribosylamino)methylideneamino] imidazole-4-carboxamide isomerase of Mannheimia succiniciproducens (strain KCTC 0769BP / MBEL55E).